A 103-amino-acid polypeptide reads, in one-letter code: ATP-dependent Clp protease adapter protein ClpS 2 (103 aa).

The protein belongs to the ClpS family. In terms of assembly, binds to the N-terminal domain of the chaperone ClpA.

Functionally, involved in the modulation of the specificity of the ClpAP-mediated ATP-dependent protein degradation. This Agrobacterium fabrum (strain C58 / ATCC 33970) (Agrobacterium tumefaciens (strain C58)) protein is ATP-dependent Clp protease adapter protein ClpS 2.